Here is a 156-residue protein sequence, read N- to C-terminus: uncharacterized protein (156 aa).

The next 5 membrane-spanning stretches (helical) occupy residues 6-26, 34-54, 68-88, 100-120, and 129-149; these read LIVL…PYFA, FWKF…HQMP, CARC…YPFI, WYLI…LIGL, and FITG…IFFE.

The protein localises to the cell membrane. This is an uncharacterized protein from Methanocaldococcus jannaschii (strain ATCC 43067 / DSM 2661 / JAL-1 / JCM 10045 / NBRC 100440) (Methanococcus jannaschii).